Reading from the N-terminus, the 106-residue chain is Putative double-stranded DNA mimic protein VP1949 (106 aa).

Belongs to the putative dsDNA mimic protein family.

May act as a double-stranded DNA (dsDNA) mimic. Probably regulates the activity of a dsDNA-binding protein. The protein is Putative double-stranded DNA mimic protein VP1949 of Vibrio parahaemolyticus serotype O3:K6 (strain RIMD 2210633).